A 224-amino-acid polypeptide reads, in one-letter code: MSKKALCIISGGMDSTLCAYLAKKEGYEIIALHFDYEQRTQEKEKECFKQICKALKVEKSYILDVSFIKDIGGNALTDKSIDIPKNELCISDIPPITYVPFRNGIFLSIAGSLAEKENCESIFIGVVEEDGSGYPDCTDEFIQKAQEFINEGTSKNFKVCIKTPLVRLNKAKIVELALKENVPLELTWSCYESEDEACGECDSCLLRLRGFEKAGFKDKIKYKS.

9–19 is an ATP binding site; the sequence is ISGGMDSTLCA. Zn(2+) contacts are provided by cysteine 190, cysteine 198, cysteine 201, and cysteine 204.

This sequence belongs to the QueC family. It depends on Zn(2+) as a cofactor.

It catalyses the reaction 7-carboxy-7-deazaguanine + NH4(+) + ATP = 7-cyano-7-deazaguanine + ADP + phosphate + H2O + H(+). It functions in the pathway purine metabolism; 7-cyano-7-deazaguanine biosynthesis. Catalyzes the ATP-dependent conversion of 7-carboxy-7-deazaguanine (CDG) to 7-cyano-7-deazaguanine (preQ(0)). This is 7-cyano-7-deazaguanine synthase from Campylobacter jejuni subsp. doylei (strain ATCC BAA-1458 / RM4099 / 269.97).